A 974-amino-acid polypeptide reads, in one-letter code: Membrane-associated phosphatidylinositol transfer protein 3 (974 aa).

Phosphoserine occurs at positions 30, 31, 109, 295, 298, 321, 343, and 495. Positions 310 to 347 (CSLASSKRLSKSNVDVSSGVEDEDPKRPLPRKQSDSST) are disordered. The span at 312-325 (LASSKRLSKSNVDV) shows a compositional bias: polar residues. Residues 390-594 (FDFDVSDFFL…VAFILRQVMR (205 aa)) form the DDHD domain. The disordered stretch occupies residues 497–535 (PLLDAPASPPQAPRFQRTERRLSKGSSHSDSSESSDSLA). Over residues 520 to 533 (KGSSHSDSSESSDS) the composition is skewed to low complexity. Phosphoserine is present on residues S612, S907, S928, and S946. The interval 927–974 (MSVQQPDPPAANPKPERAQSQPESDKDHERPLPALSWARGPPKFESVP) is disordered.

Belongs to the PtdIns transfer protein family. PI transfer class IIA subfamily. As to quaternary structure, interacts with PTK2B via its C-terminus.

It is found in the endomembrane system. Catalyzes the transfer of phosphatidylinositol and phosphatidylcholine between membranes (in vitro). Binds calcium ions. The sequence is that of Membrane-associated phosphatidylinositol transfer protein 3 (Pitpnm3) from Mus musculus (Mouse).